The primary structure comprises 554 residues: Terpene synthase 17 (554 aa).

Residues aspartate 306, aspartate 310, and glutamate 458 each contribute to the Mg(2+) site. Positions 306 to 310 (DDTYD) match the DDXXD motif motif.

Belongs to the terpene synthase family. Tpsa subfamily. Requires Mg(2+) as cofactor. The cofactor is Mn(2+).

It catalyses the reaction (2E,6E)-farnesyl diphosphate = (+)-valencene + diphosphate. The enzyme catalyses (2E,6E)-farnesyl diphosphate = (E)-beta-farnesene + diphosphate. The catalysed reaction is (2E,6E)-farnesyl diphosphate = gamma-gurjunene + diphosphate. It carries out the reaction (2Z,6Z)-farnesyl diphosphate = beta-bisabolene + diphosphate. It catalyses the reaction (2Z,6Z)-farnesyl diphosphate = (E)-gamma-bisabolene + diphosphate. The enzyme catalyses (2E)-geranyl diphosphate = limonene + diphosphate. The catalysed reaction is (2E)-geranyl diphosphate = beta-myrcene + diphosphate. It carries out the reaction (2E)-geranyl diphosphate = (E)-beta-ocimene + diphosphate. It catalyses the reaction (2E)-geranyl diphosphate = terpinolene + diphosphate. The enzyme catalyses (2E)-geranyl diphosphate = gamma-terpinene + diphosphate. The catalysed reaction is (2Z,6Z)-farnesyl diphosphate = (Z)-gamma-bisabolene + diphosphate. It carries out the reaction (2E,6E)-farnesyl diphosphate = (1S,5S,6R)-alpha-bergamotene + diphosphate. It catalyses the reaction (2Z,6Z)-farnesyl diphosphate = (1S,5S,6S)-alpha-bergamotene + diphosphate. Its pathway is secondary metabolite biosynthesis; terpenoid biosynthesis. Sesquiterpene synthase involved in the biosynthesis of volatile compounds. Mediates the conversion of (2E,6E)-farnesyl diphosphate (FPP) into gamma-gurjunene, (E)-beta-farnesene and (+)-valencene, and of (2Z,6Z)-farnesyl diphosphate ((ZZ)-FPP) into (E)-alpha-bergamotene and (Z)-gamma-bisabolene as well as beta-bisabolene, (Z)-alpha-bergamotene and (E)-gamma-bisabolene to a lower extent. Can act with a low efficiency as a monoterpene synthase with geranyl diphosphate (GPP) as substrate, thus producing beta-myrcene, (E)-beta-ocimene, limonene, terpinolene, gamma-terpinene and (Z)-beta-ocimene. This is Terpene synthase 17 from Solanum habrochaites (Wild tomato).